Consider the following 118-residue polypeptide: V-type proton ATPase subunit G 1 (118 aa).

The residue at position 2 (Ala-2) is an N-acetylalanine. The interval 55–90 (FQSKQQAAMGSQGNLSAEVEQATRRQVQGMQSSQQR) is disordered. Composition is skewed to polar residues over residues 56–69 (QSKQ…QGNL) and 78–89 (RRQVQGMQSSQQ).

It belongs to the V-ATPase G subunit family. As to quaternary structure, V-ATPase is a heteromultimeric enzyme made up of two complexes: the ATP-hydrolytic V1 complex and the proton translocation V0 complex. The V1 complex consists of three catalytic AB heterodimers that form a heterohexamer, three peripheral stalks each consisting of EG heterodimers, one central rotor including subunits D and F, and the regulatory subunits C and H. The proton translocation complex V0 consists of the proton transport subunit a, a ring of proteolipid subunits c9c'', rotary subunit d, subunits e and f, and the accessory subunits ATP6AP1/Ac45 and ATP6AP2/PRR.

It localises to the apical cell membrane. Its function is as follows. Subunit of the V1 complex of vacuolar(H+)-ATPase (V-ATPase), a multisubunit enzyme composed of a peripheral complex (V1) that hydrolyzes ATP and a membrane integral complex (V0) that translocates protons. V-ATPase is responsible for acidifying and maintaining the pH of intracellular compartments and in some cell types, is targeted to the plasma membrane, where it is responsible for acidifying the extracellular environment. In aerobic conditions, involved in intracellular iron homeostasis, thus triggering the activity of Fe(2+) prolyl hydroxylase (PHD) enzymes, and leading to HIF1A hydroxylation and subsequent proteasomal degradation. The sequence is that of V-type proton ATPase subunit G 1 (ATP6V1G1) from Canis lupus familiaris (Dog).